We begin with the raw amino-acid sequence, 216 residues long: Sperm microtubule inner protein 8 (216 aa).

As to quaternary structure, microtubule inner protein component of sperm flagellar doublet microtubules.

It localises to the cytoplasm. Its subcellular location is the cytoskeleton. The protein resides in the flagellum axoneme. Functionally, microtubule inner protein (MIP) part of the dynein-decorated doublet microtubules (DMTs) in flagellum axoneme. May serve to reinforce and thus stabilize the microtubule structure in the sperm flagella. The sequence is that of Sperm microtubule inner protein 8 (Spmip8) from Rattus norvegicus (Rat).